A 120-amino-acid polypeptide reads, in one-letter code: SPbeta prophage-derived uncharacterized protein YosG (120 aa).

In Bacillus subtilis (strain 168), this protein is SPbeta prophage-derived uncharacterized protein YosG (yosG).